The following is a 430-amino-acid chain: Serine--tRNA ligase (430 aa).

A compositionally biased stretch (polar residues) spans 45 to 58 (ENLQAERNSRSKSI). The disordered stretch occupies residues 45-65 (ENLQAERNSRSKSIGQAKARG). 237–239 (TSE) contacts L-serine. Residue 268–270 (RSE) participates in ATP binding. An L-serine-binding site is contributed by glutamate 291. 355–358 (EISS) contacts ATP. Serine 391 serves as a coordination point for L-serine.

Belongs to the class-II aminoacyl-tRNA synthetase family. Type-1 seryl-tRNA synthetase subfamily. In terms of assembly, homodimer. The tRNA molecule binds across the dimer.

It localises to the cytoplasm. The catalysed reaction is tRNA(Ser) + L-serine + ATP = L-seryl-tRNA(Ser) + AMP + diphosphate + H(+). It carries out the reaction tRNA(Sec) + L-serine + ATP = L-seryl-tRNA(Sec) + AMP + diphosphate + H(+). It functions in the pathway aminoacyl-tRNA biosynthesis; selenocysteinyl-tRNA(Sec) biosynthesis; L-seryl-tRNA(Sec) from L-serine and tRNA(Sec): step 1/1. Functionally, catalyzes the attachment of serine to tRNA(Ser). Is also able to aminoacylate tRNA(Sec) with serine, to form the misacylated tRNA L-seryl-tRNA(Sec), which will be further converted into selenocysteinyl-tRNA(Sec). In Erwinia tasmaniensis (strain DSM 17950 / CFBP 7177 / CIP 109463 / NCPPB 4357 / Et1/99), this protein is Serine--tRNA ligase.